A 193-amino-acid polypeptide reads, in one-letter code: Corrinoid adenosyltransferase (193 aa).

Residues 10 to 18 (TRTGDDGTT), K28, 137 to 142 (RRAERS), and N163 contribute to the ATP site.

This sequence belongs to the Cob(I)alamin adenosyltransferase family.

Its subcellular location is the cytoplasm. The catalysed reaction is 2 cob(II)yrinate a,c diamide + reduced [electron-transfer flavoprotein] + 2 ATP = 2 adenosylcob(III)yrinate a,c-diamide + 2 triphosphate + oxidized [electron-transfer flavoprotein] + 3 H(+). The enzyme catalyses 2 cob(II)alamin + reduced [electron-transfer flavoprotein] + 2 ATP = 2 adenosylcob(III)alamin + 2 triphosphate + oxidized [electron-transfer flavoprotein] + 3 H(+). Its pathway is cofactor biosynthesis; adenosylcobalamin biosynthesis; adenosylcobalamin from cob(II)yrinate a,c-diamide: step 2/7. The polypeptide is Corrinoid adenosyltransferase (Mycobacterium bovis (strain ATCC BAA-935 / AF2122/97)).